The chain runs to 397 residues: Phosphoglycerate kinase (397 aa).

Substrate-binding positions include 23 to 25 (DLN), Arg38, 61 to 64 (HLGR), Arg119, and Arg152. ATP contacts are provided by residues Lys202, Glu324, and 354–357 (GGDT).

Belongs to the phosphoglycerate kinase family. Monomer.

It localises to the cytoplasm. The enzyme catalyses (2R)-3-phosphoglycerate + ATP = (2R)-3-phospho-glyceroyl phosphate + ADP. It participates in carbohydrate degradation; glycolysis; pyruvate from D-glyceraldehyde 3-phosphate: step 2/5. This chain is Phosphoglycerate kinase (pgk), found in Xanthobacter flavus.